The chain runs to 513 residues: MPYLLEMKNITKTFGSVKAIDNVSLRLNAGEIVSLCGENGSGKSTLMKVLCGIYPHGSYEGEIIFAGEEIQASHIRDTERKGIAIIHQELALVKELTVLENIFLGNEITHNGIMDYDLMTLRCQKLLAQVSLSISPDTRVGDLGLGQQQLVEIAKALNKQVRLLILDEPTASLTEQETSVLLDIIRDLQQHGIACIYISHKLNEVKAISDTICVIRDGQHIGTRDAAGMSEDDIITMMVGRELTALYPNEPHTTGDEILRIEHLTAWHPVNRHIKRVNDVSFSLKRGEILGIAGLVGAGRTETIQCLFGVWPGQWEGKIYIDGKQVDIRNCQQAIAQGIAMVPEDRKRDGIVPVMAVGKNITLAALNKFTGGISQLDDAAEQKCILESIQQLKVKTSSSDLAIGRLSGGNQQKAILARCLLLNPRILILDEPTRGIDIGAKYEIYKLINQLVQQGIAVIVISSELPEVLGLSDRVLVMHEGKLKANLINHNLTQEQVMEAALRSEHHVEKQSV.

2 ABC transporter domains span residues 5-242 and 259-505; these read LEMK…VGRE and LRIE…LRSE. 37-44 contributes to the ATP binding site; that stretch reads GENGSGKS.

Belongs to the ABC transporter superfamily. Xylose importer (TC 3.A.1.2.4) family. As to quaternary structure, the complex is composed of two ATP-binding proteins (XylG), two transmembrane proteins (XylH) and a solute-binding protein (XylF).

It localises to the cell inner membrane. The enzyme catalyses D-xylose(out) + ATP + H2O = D-xylose(in) + ADP + phosphate + H(+). Its function is as follows. Part of the ABC transporter complex XylFGH involved in xylose import. Responsible for energy coupling to the transport system. This is Xylose import ATP-binding protein XylG from Escherichia coli (strain UTI89 / UPEC).